We begin with the raw amino-acid sequence, 189 residues long: Hypoxanthine/guanine phosphoribosyltransferase (189 aa).

The protein belongs to the purine/pyrimidine phosphoribosyltransferase family. Archaeal HPRT subfamily. In terms of assembly, homodimer.

It is found in the cytoplasm. It catalyses the reaction IMP + diphosphate = hypoxanthine + 5-phospho-alpha-D-ribose 1-diphosphate. It carries out the reaction GMP + diphosphate = guanine + 5-phospho-alpha-D-ribose 1-diphosphate. It functions in the pathway purine metabolism; IMP biosynthesis via salvage pathway; IMP from hypoxanthine: step 1/1. Catalyzes a salvage reaction resulting in the formation of IMP that is energically less costly than de novo synthesis. The protein is Hypoxanthine/guanine phosphoribosyltransferase of Methanothrix soehngenii (strain ATCC 5969 / DSM 3671 / JCM 10134 / NBRC 103675 / OCM 69 / GP-6) (Methanosaeta concilii).